Consider the following 241-residue polypeptide: Phosphatidylcholine synthase (241 aa).

Over 1 to 15 the chain is Cytoplasmic; sequence MKIFNYKRVPYAEIR. A helical membrane pass occupies residues 16-36; it reads AFSVHILTASGSFLAFLGVVA. At 37-41 the chain is on the periplasmic side; that stretch reads ASEHR. The chain crosses the membrane as a helical span at residues 42-62; the sequence is FVDMFWWLGLALLVDGIDGPI. Residues 63-76 are Cytoplasmic-facing; the sequence is ARKVRVKEVLPNWS. Residues 77–97 form a helical membrane-spanning segment; the sequence is GDTLDNIIDYVTYVLLPAFAL. The Periplasmic segment spans residues 98-100; sequence YQS. The helical transmembrane segment at 101-121 threads the bilayer; it reads GMIGEPLSFVAAGMIVVSSAI. Residues 122–133 lie on the Cytoplasmic side of the membrane; that stretch reads YYADMGMKTDEY. The chain crosses the membrane as a helical span at residues 134–154; it reads FFSGFPVVWNMVVFTLFVMDA. At 155–159 the chain is on the periplasmic side; sequence SATTA. Residues 160-180 traverse the membrane as a helical segment; it reads MTVVTVSVFLTFLPINFLHPV. The Cytoplasmic portion of the chain corresponds to 181–187; sequence RVKRLRP. A helical transmembrane segment spans residues 188–208; sequence LNLLVVAIWCALGGYALLMHF. At 209 to 214 the chain is on the periplasmic side; that stretch reads ETPTWA. A helical membrane pass occupies residues 215–235; it reads VIAFVASGIYLYCIGGILQFF. Topologically, residues 236-241 are cytoplasmic; that stretch reads PSLGAK.

It belongs to the CDP-alcohol phosphatidyltransferase class-I family. Mn(2+) is required as a cofactor.

It is found in the cell inner membrane. The enzyme catalyses a CDP-1,2-diacyl-sn-glycerol + choline = a 1,2-diacyl-sn-glycero-3-phosphocholine + CMP + H(+). In terms of biological role, condenses choline with CDP-diglyceride to produce phosphatidylcholine and CMP. Affects motility, biofilm formation and virulence of this bacterium when there is a complete loss of phosphatidylcholine formation due to absence of both the synthase (pcs) and the methylation (pmtA) pathways. The sequence is that of Phosphatidylcholine synthase from Agrobacterium fabrum (strain C58 / ATCC 33970) (Agrobacterium tumefaciens (strain C58)).